The chain runs to 221 residues: Cytochrome c biogenesis ATP-binding export protein CcmA (221 aa).

The ABC transporter domain maps to 14–221 (LACHDVSCLR…FDLLDESHFS (208 aa)). 46–53 (GANGIGKS) contributes to the ATP binding site.

The protein belongs to the ABC transporter superfamily. CcmA exporter (TC 3.A.1.107) family. The complex is composed of two ATP-binding proteins (CcmA) and two transmembrane proteins (CcmB).

It is found in the cell inner membrane. The catalysed reaction is heme b(in) + ATP + H2O = heme b(out) + ADP + phosphate + H(+). Its function is as follows. Part of the ABC transporter complex CcmAB involved in the biogenesis of c-type cytochromes; once thought to export heme, this seems not to be the case, but its exact role is uncertain. Responsible for energy coupling to the transport system. The chain is Cytochrome c biogenesis ATP-binding export protein CcmA from Zymomonas mobilis subsp. mobilis (strain ATCC 31821 / ZM4 / CP4).